A 233-amino-acid chain; its full sequence is Adenosylcobinamide-GDP ribazoletransferase (233 aa).

7 helical membrane-spanning segments follow: residues 24–44 (LWAL…VLYL), 46–66 (LPLS…LLHL), 96–116 (IAGV…LPLL), 117–137 (PFYA…LALA), 158–178 (QLTL…YIEP), 181–198 (ISSL…RLSL), and 209–229 (IGAV…VVWV).

Belongs to the CobS family. The cofactor is Mg(2+).

Its subcellular location is the cell membrane. It catalyses the reaction alpha-ribazole + adenosylcob(III)inamide-GDP = adenosylcob(III)alamin + GMP + H(+). It carries out the reaction alpha-ribazole 5'-phosphate + adenosylcob(III)inamide-GDP = adenosylcob(III)alamin 5'-phosphate + GMP + H(+). It functions in the pathway cofactor biosynthesis; adenosylcobalamin biosynthesis; adenosylcobalamin from cob(II)yrinate a,c-diamide: step 7/7. Its function is as follows. Joins adenosylcobinamide-GDP and alpha-ribazole to generate adenosylcobalamin (Ado-cobalamin). Also synthesizes adenosylcobalamin 5'-phosphate from adenosylcobinamide-GDP and alpha-ribazole 5'-phosphate. The protein is Adenosylcobinamide-GDP ribazoletransferase of Thermococcus gammatolerans (strain DSM 15229 / JCM 11827 / EJ3).